A 310-amino-acid chain; its full sequence is Glycine-rich RNA-binding protein RZ1C (310 aa).

An RRM domain is found at 7 to 85 (SRIFVGGLSP…RVISVNRAEP (79 aa)). Residue S15 is modified to Phosphoserine. Residues 82–120 (RAEPKLGRDDGESHGSRGGRDSGYSIAGKGSFGGGGGGG) are disordered. Positions 83–101 (AEPKLGRDDGESHGSRGGR) are enriched in basic and acidic residues. The segment covering 111–120 (GSFGGGGGGG) has biased composition (gly residues). Residues 128–143 (CFKCGRVGHWARDCPS) form a CCHC-type zinc finger. Positions 224–310 (RFAGGDRYSR…YPSSSTFDRY (87 aa)) are disordered. 2 stretches are compositionally biased toward basic and acidic residues: residues 226–236 (AGGDRYSRGSD) and 244–253 (DKARSFERDI). Residues 261-273 (RYGGGRAGGPIRG) are compositionally biased toward gly residues. At S295 the chain carries Phosphoserine.

As to expression, expressed in roots, rosette and cauline leaves, stems, floral buds and flowers.

It localises to the nucleus. Its function is as follows. Binds RNA and DNA sequences non-specifically. May be involved in tolerance to cold stress. The polypeptide is Glycine-rich RNA-binding protein RZ1C (Arabidopsis thaliana (Mouse-ear cress)).